A 624-amino-acid chain; its full sequence is Probable Xaa-Pro aminopeptidase P (624 aa).

Asp-421, Asp-432, Glu-530, and Glu-544 together coordinate Mn(2+).

The protein belongs to the peptidase M24B family. Requires Mn(2+) as cofactor.

The enzyme catalyses Release of any N-terminal amino acid, including proline, that is linked to proline, even from a dipeptide or tripeptide.. Functionally, catalyzes the removal of a penultimate prolyl residue from the N-termini of peptides. The polypeptide is Probable Xaa-Pro aminopeptidase P (AMPP) (Arthroderma otae (strain ATCC MYA-4605 / CBS 113480) (Microsporum canis)).